A 349-amino-acid polypeptide reads, in one-letter code: N-acetyltaurine hydrolase (349 aa).

Residues histidine 26, histidine 28, glutamate 169, histidine 201, histidine 230, and aspartate 298 each contribute to the a divalent metal cation site.

It belongs to the metallo-dependent hydrolases superfamily. Phosphotriesterase family. The cofactor is a divalent metal cation.

The protein localises to the cytoplasm. It localises to the cytosol. It catalyses the reaction N-acetyltaurine + H2O = taurine + acetate. It carries out the reaction N-propanoyltaurine + H2O = propanoate + taurine. The catalysed reaction is N-acetyl-L-methionine + H2O = L-methionine + acetate. The enzyme catalyses N-acetyl-L-isoleucine + H2O = L-isoleucine + acetate. It catalyses the reaction N-acetyl-L-leucine + H2O = L-leucine + acetate. It carries out the reaction N-acetyl-L-valine + H2O = L-valine + acetate. Functionally, N-acetyltaurine hydrolase that catalyzes the hydrolysis of N-acetyltaurine into taurine and acetate. PTER also acts on other N-acetyl amino acids (Met, Ile, Leu, Val) and N-propionyltaurine, but at lower rates. This chain is N-acetyltaurine hydrolase (pter), found in Xenopus tropicalis (Western clawed frog).